The following is a 160-amino-acid chain: Type IV major fimbrial protein FimA (160 aa).

A propeptide spans 1–7 (leader sequence); the sequence is MKSLQKG. N-methylphenylalanine is present on F8. A helical membrane pass occupies residues 8-28; that stretch reads FTLIELMIVVAIIGILAAIAI.

This sequence belongs to the N-Me-Phe pilin family. In terms of assembly, the pili are polar flexible filaments of about 5.4 nanometers diameter and 2.5 micrometers average length; they consist of only a single polypeptide chain arranged in a helical configuration of five subunits per turn in the assembled pilus.

Its subcellular location is the fimbrium. The protein resides in the membrane. Major component of the type IV fimbriae that plays an essential role in twitching motility, natural transformation, and protease secretion. The chain is Type IV major fimbrial protein FimA (fimA) from Dichelobacter nodosus (Bacteroides nodosus).